A 632-amino-acid chain; its full sequence is PWWP domain-containing protein 5 (632 aa).

The PWWP domain maps to 97-158 (DSDLVWAKLR…ASQIKPFHQN (62 aa)). A disordered region spans residues 310-452 (RKTDYKDNAE…AERKISSPDE (143 aa)). Composition is skewed to basic and acidic residues over residues 313–326 (DYKDNAEQTKEKTL), 339–364 (STEKLDGKSHSEKKRKVESSESGKSE), 371–383 (QQKEDSVSKHSNE), and 425–449 (KSTEVENEKTKKPRHQELAERKISS). Positions 352–359 (KRKVESSE) match the Nuclear localization signal motif.

Belongs to the PDP family. In terms of assembly, component of the PRC2 (polycomb repressive complex 2) complex which regulates histone methylation on histone H3K27.

It localises to the nucleus. May influence gene expression by regulating the function of the PRC2 complex and modulating H3K27me3 level. The sequence is that of PWWP domain-containing protein 5 from Arabidopsis thaliana (Mouse-ear cress).